Reading from the N-terminus, the 383-residue chain is Putative F-box protein At4g09190 (383 aa).

The F-box domain maps to 16-67 (RSQREHIPLDLIVEIVSSLPAKSIVRFRSVSKLWSSIITTPDFTSSVVTRSL).

The polypeptide is Putative F-box protein At4g09190 (Arabidopsis thaliana (Mouse-ear cress)).